The primary structure comprises 1612 residues: uncharacterized protein (1612 aa).

Residues 23–52 (ENKNIEMTTLKDKKEMKNENLSKINVKKEN) are a coiled coil. Positions 46-93 (INVKKENHDKNHDKNHDKNHDKNHDKNHDKNHDKNHDKNHDKNHDKNH) are enriched in basic and acidic residues. Disordered stretches follow at residues 46 to 94 (INVK…KNHV) and 369 to 400 (EDDNKSDNPLYSNNNTLKEQNTSTPLPSHEIQ). Positions 375–394 (DNPLYSNNNTLKEQNTSTPL) are enriched in polar residues. A helical transmembrane segment spans residues 479–499 (FIVTLSEICLILTPHYVNIIN). 4 disordered regions span residues 698–777 (TSLT…EKKL), 992–1037 (NELD…KNDP), 1091–1157 (SGKS…RNMS), and 1257–1291 (NQTTNNNTYNNQTSNHMNENLHTDESSKSNNNQDK). Residues 708 to 777 (KNDEIKKTGE…KKKTGEEKKL (70 aa)) are compositionally biased toward basic and acidic residues. 3 stretches are compositionally biased toward low complexity: residues 996–1028 (NNNNKNNNNNKNNNNNKNNNNNNNNNNNNNNNN), 1102–1140 (SNNNNNVNNMNNNMNNNMNNNMNNHMNSNNNVVDSNSTN), and 1257–1271 (NQTTNNNTYNNQTSN). Coiled coils occupy residues 1338-1362 (YCNNKNKNKNKNKNKNKNMEQINNK), 1444-1469 (SNKKILIEKLIDKLDDYKKKINIDND), and 1553-1601 (NMED…KFLT). Positions 1554–1566 (MEDEKNEKLNDKE) are enriched in basic and acidic residues. Residues 1554 to 1612 (MEDEKNEKLNDKEGEYEDVTENLNEQEAEEEAEEEAEEEEEEEDKFLTPEHLPINVEIK) form a disordered region. The segment covering 1567-1597 (GEYEDVTENLNEQEAEEEAEEEAEEEEEEED) has biased composition (acidic residues).

The protein resides in the membrane. This is an uncharacterized protein from Plasmodium falciparum (isolate 3D7).